The primary structure comprises 1234 residues: ATP-dependent helicase/nuclease subunit A (1234 aa).

The 474-residue stretch at 2–475 (TQFTTSQQAA…IILAENFRST (474 aa)) folds into the UvrD-like helicase ATP-binding domain. 23-30 (ASAGSGKT) is an ATP binding site. The 300-residue stretch at 507–806 (YGALDYGDAH…KLMTIHKSKG (300 aa)) folds into the UvrD-like helicase C-terminal domain.

It belongs to the helicase family. AddA subfamily. Heterodimer of AddA and AddB/RexB. Requires Mg(2+) as cofactor.

The enzyme catalyses Couples ATP hydrolysis with the unwinding of duplex DNA by translocating in the 3'-5' direction.. The catalysed reaction is ATP + H2O = ADP + phosphate + H(+). The heterodimer acts as both an ATP-dependent DNA helicase and an ATP-dependent, dual-direction single-stranded exonuclease. Recognizes the chi site generating a DNA molecule suitable for the initiation of homologous recombination. The AddA nuclease domain is required for chi fragment generation; this subunit has the helicase and 3' -&gt; 5' nuclease activities. In Lacticaseibacillus casei (strain BL23) (Lactobacillus casei), this protein is ATP-dependent helicase/nuclease subunit A.